The following is a 171-amino-acid chain: uncharacterized protein (171 aa).

This is an uncharacterized protein from Encephalitozoon cuniculi (strain GB-M1) (Microsporidian parasite).